The chain runs to 99 residues: High mobility group protein I (99 aa).

The disordered stretch occupies residues 1–99 (MSDSPVKKGR…ADTEEVNSSD (99 aa)). Ser4 carries the phosphoserine; by CDC2 and MAPK modification. The segment at residues 7–19 (KKGRGRPAKAKPE) is a DNA-binding region (a.T hook 1). Residues 16–46 (AKPEETASPKAAKKEEKKVEEVPKKIEESTK) show a composition bias toward basic and acidic residues. Position 23 is a phosphoserine; by MAPK (Ser23). Positions 54–66 (KKGRGRPSKGDKA) form a DNA-binding region, a.T hook 2. Ser73 bears the Phosphoserine; by PKC mark. Positions 74–86 (GKGRGRPAKNAKK) form a DNA-binding region, a.T hook 3. Acidic residues predominate over residues 90–99 (ADTEEVNSSD).

This sequence belongs to the HMGA family. In terms of processing, phosphorylated in a cell-cycle dependent manner; substantially reduced in cells that have finished proliferating and are differentiated. Phosphorylation at Ser-4 and Ser-23 results in a 10-fold weakening of DNA-binding activity and altered the mode of protein-DNA interaction.

It is found in the nucleus. It localises to the nucleolus. The protein resides in the chromosome. Its function is as follows. Binds preferentially to the minor groove of A+T rich regions in double-stranded DNA via the second and third DBA-binding domains. It is suggested that these proteins could function in nucleosome phasing and in the 3'-end processing of mRNA transcripts. They are also involved in the transcription regulation of genes containing, or in close proximity to A+T-rich regions. In Chironomus tentans (Midge), this protein is High mobility group protein I.